Reading from the N-terminus, the 392-residue chain is Tryptophan synthase beta chain (392 aa).

Lys-84 carries the N6-(pyridoxal phosphate)lysine modification.

Belongs to the TrpB family. As to quaternary structure, tetramer of two alpha and two beta chains. Pyridoxal 5'-phosphate is required as a cofactor.

The enzyme catalyses (1S,2R)-1-C-(indol-3-yl)glycerol 3-phosphate + L-serine = D-glyceraldehyde 3-phosphate + L-tryptophan + H2O. It functions in the pathway amino-acid biosynthesis; L-tryptophan biosynthesis; L-tryptophan from chorismate: step 5/5. The beta subunit is responsible for the synthesis of L-tryptophan from indole and L-serine. This Campylobacter jejuni subsp. doylei (strain ATCC BAA-1458 / RM4099 / 269.97) protein is Tryptophan synthase beta chain.